The primary structure comprises 328 residues: Protein phosphatase 1 regulatory inhibitor subunit PPP1R7 homolog (328 aa).

13 LRR repeats span residues 13-36 (IGDS…VELP), 37-59 (PNLI…IAQL), 61-82 (TLKK…PLSH), 86-110 (LSDL…IFTK), 111-130 (LLVY…ISKA), 131-153 (SSTL…IEHL), 154-177 (HNLQ…NFTK), 179-196 (EELW…LCGL), 197-221 (KCIK…CVAL), 223-240 (ELYL…LSAL), 241-264 (VNLR…NLTK), 266-287 (EDLW…AVTG), and 289-312 (KEKL…VAAV).

Interacts with human protein phosphatase PPP1C.

Inhibitor of protein-phosphatase 1 (PP1). Binds to and inhibits PP1 activity. The protein is Protein phosphatase 1 regulatory inhibitor subunit PPP1R7 homolog of Arabidopsis thaliana (Mouse-ear cress).